The primary structure comprises 292 residues: Ribosomal protein L11 methyltransferase (292 aa).

S-adenosyl-L-methionine is bound by residues T144, G165, D187, and N229.

This sequence belongs to the methyltransferase superfamily. PrmA family.

The protein resides in the cytoplasm. The enzyme catalyses L-lysyl-[protein] + 3 S-adenosyl-L-methionine = N(6),N(6),N(6)-trimethyl-L-lysyl-[protein] + 3 S-adenosyl-L-homocysteine + 3 H(+). Methylates ribosomal protein L11. The protein is Ribosomal protein L11 methyltransferase of Pseudomonas putida (strain GB-1).